The sequence spans 349 residues: Isopentenyl-diphosphate delta-isomerase (349 aa).

6–7 (RK) contributes to the substrate binding site. FMN-binding positions include 62–64 (AMT), Ser-93, and Asn-122. A substrate-binding site is contributed by Gln-152. Mg(2+) is bound at residue Glu-153. FMN is bound by residues Lys-184, Thr-214, 258–259 (GG), and 280–281 (AG).

The protein belongs to the IPP isomerase type 2 family. As to quaternary structure, homooctamer. Dimer of tetramers. It depends on FMN as a cofactor. NADPH serves as cofactor. Requires Mg(2+) as cofactor.

The protein resides in the cytoplasm. The catalysed reaction is isopentenyl diphosphate = dimethylallyl diphosphate. Involved in the biosynthesis of isoprenoids. Catalyzes the 1,3-allylic rearrangement of the homoallylic substrate isopentenyl (IPP) to its allylic isomer, dimethylallyl diphosphate (DMAPP). The polypeptide is Isopentenyl-diphosphate delta-isomerase (Bacillus cereus (strain AH820)).